We begin with the raw amino-acid sequence, 299 residues long: GTPase Era (299 aa).

The Era-type G domain maps to 4–171; it reads KSGFVAILGR…ISLLTDNLEE (168 aa). The tract at residues 12–19 is G1; the sequence is GRPNVGKS. 12-19 provides a ligand contact to GTP; sequence GRPNVGKS. Positions 38-42 are G2; it reads QTTRN. The tract at residues 59-62 is G3; the sequence is DTPG. GTP is bound by residues 59 to 63 and 121 to 124; these read DTPGI and NKID. The tract at residues 121 to 124 is G4; it reads NKID. The G5 stretch occupies residues 150–152; that stretch reads ISA. In terms of domain architecture, KH type-2 spans 202-280; the sequence is TQQEIPHSVA…YLETWVKVKK (79 aa).

The protein belongs to the TRAFAC class TrmE-Era-EngA-EngB-Septin-like GTPase superfamily. Era GTPase family. In terms of assembly, monomer.

The protein resides in the cytoplasm. Its subcellular location is the cell membrane. In terms of biological role, an essential GTPase that binds both GDP and GTP, with rapid nucleotide exchange. Plays a role in 16S rRNA processing and 30S ribosomal subunit biogenesis and possibly also in cell cycle regulation and energy metabolism. The protein is GTPase Era of Streptococcus uberis (strain ATCC BAA-854 / 0140J).